A 580-amino-acid chain; its full sequence is Rho guanine nucleotide exchange factor 25 (580 aa).

The span at 48–67 (AASGLAAPSGPSSGLSSGPC) shows a compositional bias: low complexity. Disordered stretches follow at residues 48 to 76 (AASG…GPVS) and 128 to 157 (LEGP…KKKA). The 177-residue stretch at 160–336 (RSMYVLSELV…CFVPKRCNDM (177 aa)) folds into the DH domain. The interval 278 to 299 (LGHRLQLNDLLIKPVQRIMKYQ) is important for binding to Rho GTPases. The 119-residue stretch at 348–466 (KLTAQGKLLG…WIKHVAQILE (119 aa)) folds into the PH domain. Residues 467–493 (SQRDFLNALQSPIEYQRRESQTNSLGR) are sufficient to bind activated GNAQ. Disordered regions lie at residues 482–524 (QRRE…GSLP) and 545–580 (ALGD…EDEL). Over residues 509-520 (DQAQGSTHTPIN) the composition is skewed to polar residues. The segment covering 555–566 (DSPPVSPTPKTP) has biased composition (pro residues).

In terms of assembly, interacts (via the DH domain) with POPDC1 (via the C-terminus cytoplasmic tail). Interacts with activated GNAQ and GNA11. Interacts with RHOA, CDC42 and RAC1. In terms of tissue distribution, isoform 1 and isoform 2 are highly expressed in excitable tissues, such as brain, heart and muscle. Also detected in kidney and liver.

It is found in the cell membrane. It localises to the cytoplasm. The protein resides in the myofibril. Its subcellular location is the sarcomere. Functionally, may play a role in actin cytoskeleton reorganization in different tissues since its activation induces formation of actin stress fibers. It works as a guanine nucleotide exchange factor for Rho family of small GTPases. Links specifically G alpha q/11-coupled receptors to RHOA activation. May be an important regulator of processes involved in axon and dendrite formation. In neurons seems to be an exchange factor primarily for RAC1. Involved in skeletal myogenesis. This chain is Rho guanine nucleotide exchange factor 25 (ARHGEF25), found in Homo sapiens (Human).